The chain runs to 213 residues: Transcription antitermination protein NusB (213 aa).

The protein belongs to the NusB family.

Involved in transcription antitermination. Required for transcription of ribosomal RNA (rRNA) genes. Binds specifically to the boxA antiterminator sequence of the ribosomal RNA (rrn) operons. This is Transcription antitermination protein NusB from Picosynechococcus sp. (strain ATCC 27264 / PCC 7002 / PR-6) (Agmenellum quadruplicatum).